A 76-amino-acid chain; its full sequence is NADH-ubiquinone oxidoreductase chain 4L (76 aa).

The next 3 membrane-spanning stretches (helical) occupy residues 1–21, 29–49, and 56–76; these read MTPVHFSFTSAFILGLMGLAF, ALLCLEGMMLSLFIALSLWAL, and YSVAPMLLLAFSACEASAGLA.

This sequence belongs to the complex I subunit 4L family.

It is found in the mitochondrion membrane. The enzyme catalyses a ubiquinone + NADH + 5 H(+)(in) = a ubiquinol + NAD(+) + 4 H(+)(out). In terms of biological role, core subunit of the mitochondrial membrane respiratory chain NADH dehydrogenase (Complex I) which catalyzes electron transfer from NADH through the respiratory chain, using ubiquinone as an electron acceptor. Part of the enzyme membrane arm which is embedded in the lipid bilayer and involved in proton translocation. This Oncorhynchus masou (Cherry salmon) protein is NADH-ubiquinone oxidoreductase chain 4L (MT-ND4L).